We begin with the raw amino-acid sequence, 97 residues long: Co-chaperonin GroES (97 aa).

The protein belongs to the GroES chaperonin family. In terms of assembly, heptamer of 7 subunits arranged in a ring. Interacts with the chaperonin GroEL.

It localises to the cytoplasm. Its function is as follows. Together with the chaperonin GroEL, plays an essential role in assisting protein folding. The GroEL-GroES system forms a nano-cage that allows encapsulation of the non-native substrate proteins and provides a physical environment optimized to promote and accelerate protein folding. GroES binds to the apical surface of the GroEL ring, thereby capping the opening of the GroEL channel. This chain is Co-chaperonin GroES, found in Stutzerimonas stutzeri (strain A1501) (Pseudomonas stutzeri).